We begin with the raw amino-acid sequence, 2179 residues long: Axotactin (2179 aa).

The signal sequence occupies residues 1-18; sequence MAFPYIWALLPLICSASG. The Extracellular segment spans residues 19 to 1816; the sequence is LSLPNMTSTD…DENKQEDSTQ (1798 aa). N-linked (GlcNAc...) asparagine glycosylation is found at asparagine 23 and asparagine 52. Residues 59-107 are disordered; that stretch reads GGLAGSSTGGQSLPDTGGGNSAGGSPAGGSSGTGGGGSNSGISGNNSAM. Residues 74-97 show a composition bias toward gly residues; the sequence is TGGGNSAGGSPAGGSSGTGGGGSN. Residue asparagine 103 is glycosylated (N-linked (GlcNAc...) asparagine). A BPTI/Kunitz inhibitor domain is found at 119 to 170; sequence CAGPGDPGPCKQYIYKWRYEPTTNECTNFIWGGCEGNPQNRFGTEAECLFHC. 3 disulfides stabilise this stretch: cysteine 119-cysteine 170, cysteine 128-cysteine 152, and cysteine 144-cysteine 166. Positions 201–220 are disordered; the sequence is YTQSPAQSPDGMGGAEGGDG. Residues 211–220 show a composition bias toward gly residues; that stretch reads GMGGAEGGDG. Positions 242–438 constitute a Laminin G-like 1 domain; that stretch reads KTFIFAKNNT…TKHENVNEGC (197 aa). A glycan (N-linked (GlcNAc...) asparagine) is linked at asparagine 249. Disulfide bonds link cysteine 405-cysteine 438, cysteine 442-cysteine 455, cysteine 449-cysteine 464, and cysteine 466-cysteine 476. The EGF-like 1 domain maps to 439–477; the sequence is SDMCESRHNLCFVGSRCINHYGGISCDCFGTHYEGEHCD. Laminin G-like domains lie at 481–664 and 660–839; these read ATII…AEFV and EAEF…LDNC. Residues asparagine 542, asparagine 571, and asparagine 741 are each glycosylated (N-linked (GlcNAc...) asparagine). 4 cysteine pairs are disulfide-bonded: cysteine 808/cysteine 839, cysteine 845/cysteine 857, cysteine 851/cysteine 866, and cysteine 868/cysteine 878. Residues 841 to 879 enclose the EGF-like 2 domain; sequence YIDPCKRPNTCEHGGKCFVKDDRVTCDCKHTGYIGKNCH. 4 N-linked (GlcNAc...) asparagine glycosylation sites follow: asparagine 925, asparagine 1000, asparagine 1019, and asparagine 1026. In terms of domain architecture, Laminin G-like 4 spans 1087–1259; it reads YVVTFTTSQS…VHLSEIIKDC (173 aa). 4 disulfide bridges follow: cysteine 1231/cysteine 1259, cysteine 1263/cysteine 1274, cysteine 1268/cysteine 1283, and cysteine 1285/cysteine 1296. Residues 1260–1297 enclose the EGF-like 3 domain; sequence KPSCVPSPCRNGAQCKELWSSFKCVCNNPWAHIGEFCE. A Laminin G-like 5 domain is found at 1316 to 1526; it reads RNYLSVGATP…PTQEGVLPNC (211 aa). A glycan (N-linked (GlcNAc...) asparagine) is linked at asparagine 1393. Intrachain disulfides connect cysteine 1494–cysteine 1526, cysteine 1530–cysteine 1541, cysteine 1535–cysteine 1552, and cysteine 1554–cysteine 1564. Residues 1527–1565 form the EGF-like 4 domain; it reads QIKCDAEPCKNGGTCQEHFAEQLSTCDCEHTSFLGEFCS. A Laminin G-like 6 domain is found at 1569–1765; sequence GADFSGESTL…NPQGVRSAQC (197 aa). Asparagine 1667, asparagine 1707, asparagine 1751, and asparagine 1782 each carry an N-linked (GlcNAc...) asparagine glycan. Cysteine 1722 and cysteine 1765 form a disulfide bridge. A helical transmembrane segment spans residues 1817-1837; sequence VVFLTLTSVFVIIVICCLLEV. Over 1838-2179 the chain is Cytoplasmic; the sequence is YRSHLAYKKR…TSIDSILSLD (342 aa). Disordered regions lie at residues 1891–2141 and 2156–2179; these read YTYK…PTLF and SYLG…LSLD. A compositionally biased stretch (polar residues) spans 1916-1930; the sequence is GSATPSQPGTPTALS. Over residues 1940-1949 the composition is skewed to acidic residues; the sequence is EEEEEEEDEA. Residues 1954-1966 are compositionally biased toward basic and acidic residues; the sequence is AAEKSGENEEPPA. 2 stretches are compositionally biased toward polar residues: residues 1969 to 1981 and 2010 to 2025; these read TTAS…QAQP and EPSS…QLAQ. The segment covering 2064–2079 has biased composition (basic and acidic residues); it reads PQEHKSRHKATDDTEA. Low complexity predominate over residues 2082–2091; the sequence is QQQQQQQQQQ. 2 stretches are compositionally biased toward polar residues: residues 2092 to 2105 and 2165 to 2179; these read SFDV…SSLP and PRSN…LSLD.

It is found in the cell projection. The protein resides in the axon. Its subcellular location is the membrane. In terms of biological role, may have serine protease inhibitor activity. Might play a role in the glial-neuronal signaling pathway that is important in establishing the electrical properties of axonal membranes. This Drosophila melanogaster (Fruit fly) protein is Axotactin.